The chain runs to 107 residues: Thiosulfate sulfurtransferase GlpE (107 aa).

One can recognise a Rhodanese domain in the interval 17–101 (AAGAARLVDI…GFEAWRREFP (85 aa)). The active-site Cysteine persulfide intermediate is the cysteine 65.

The protein belongs to the GlpE family.

It is found in the cytoplasm. The catalysed reaction is thiosulfate + hydrogen cyanide = thiocyanate + sulfite + 2 H(+). It carries out the reaction thiosulfate + [thioredoxin]-dithiol = [thioredoxin]-disulfide + hydrogen sulfide + sulfite + 2 H(+). Transferase that catalyzes the transfer of sulfur from thiosulfate to thiophilic acceptors such as cyanide or dithiols. May function in a CysM-independent thiosulfate assimilation pathway by catalyzing the conversion of thiosulfate to sulfite, which can then be used for L-cysteine biosynthesis. In Aeromonas hydrophila subsp. hydrophila (strain ATCC 7966 / DSM 30187 / BCRC 13018 / CCUG 14551 / JCM 1027 / KCTC 2358 / NCIMB 9240 / NCTC 8049), this protein is Thiosulfate sulfurtransferase GlpE.